The following is a 38-amino-acid chain: Large ribosomal subunit protein bL36 (38 aa).

The protein belongs to the bacterial ribosomal protein bL36 family.

The chain is Large ribosomal subunit protein bL36 from Azotobacter vinelandii (strain DJ / ATCC BAA-1303).